Consider the following 847-residue polypeptide: MQFGKSLLKHVYTRTFKSSLTCSIFAFTLLMIFFVLDWKRMNVYPRLDEIPGLNVLRAWDDLQEITKSPHPYNSHASDVVRNYILEELYKLKKQDEGNVEVIDDLSSTTTFIMPDTNIRSYFEGSNILVRFRGDNERLRPILLSSHFDSVSTGFGATDNGMGVASALELARYYAEHKPERDLIINFNNAEEDYLYGARAFTEHEWSKNVTAFLNLEGAGAGGKALLFRSTNNHVARSYFKSNRFAFASVLGIDAFKRGVIKSETDYVVYEKMNNGTAGLDLAFFRNRGIYHTERDDIQHTSIFSLNHMLVNAFISLRNLLDEKSQHFKGSSPLYFPVFGSYWQINLNLHLFLNVVFLIACPAILFMCLFRFPSLYAQLKKPCYLICFTLSSLFVLIFDYVVVQSLTKLNPYVIHSSPDAVLAFFFLTNLLGLVYSFRYVATHSRMSNEELSCIEIVLIWYVSMFWYISLLIATLTSIVRGLGSLYFVNFGFFCSFFCCILTLIRVRYFVDRMVTINRPANPEQMPLVQSTSGNAYGTSRYPQHRLKAVVSKSASVKLNDNLWSVLFFSCLVPLPLFTCYNLLSEVFIPAVHQSLIDGPYSNTCYKFAVILVFMAIINSSPFVFRALSKKSSAILLMLWVSLLFNILRAEPFNEKAPIKFRVFQHLNLDTSENLFHVQNIEPYTQKVLNDYPKIISDTSYQCVDRDCFYEAEEPTLGFDGPLQNAINITLHKSLNSSLAELRVDAFETKWCYFDFSVPVYVDSINGFEVQEEHQSLRLGVRNFGTPFVVKTVAKDEDSPTNVTVTCMWDEFDHDKIPSYTSLLNYIPAWSVLTKNSTGLLKMSKTHVM.

Residues 1–17 (MQFGKSLLKHVYTRTFK) are Cytoplasmic-facing. Residues 18 to 38 (SSLTCSIFAFTLLMIFFVLDW) form a helical membrane-spanning segment. The Vacuolar segment spans residues 39–348 (KRMNVYPRLD…GSYWQINLNL (310 aa)). The Zn(2+) site is built by His-146 and Asp-158. Catalysis depends on Glu-190, which acts as the Proton acceptor. Glu-191 contributes to the Zn(2+) binding site. An N-linked (GlcNAc...) asparagine glycan is attached at Asn-208. Glu-216 is a binding site for Zn(2+). The N-linked (GlcNAc...) asparagine glycan is linked to Asn-274. His-291 contacts Zn(2+). The chain crosses the membrane as a helical span at residues 349–369 (HLFLNVVFLIACPAILFMCLF). Residues 370 to 381 (RFPSLYAQLKKP) lie on the Cytoplasmic side of the membrane. The helical transmembrane segment at 382–402 (CYLICFTLSSLFVLIFDYVVV) threads the bilayer. The Vacuolar portion of the chain corresponds to 403 to 415 (QSLTKLNPYVIHS). Residues 416 to 436 (SPDAVLAFFFLTNLLGLVYSF) form a helical membrane-spanning segment. Residues 437-454 (RYVATHSRMSNEELSCIE) lie on the Cytoplasmic side of the membrane. The chain crosses the membrane as a helical span at residues 455–475 (IVLIWYVSMFWYISLLIATLT). At 476 to 482 (SIVRGLG) the chain is on the vacuolar side. A helical transmembrane segment spans residues 483–503 (SLYFVNFGFFCSFFCCILTLI). The Cytoplasmic segment spans residues 504–560 (RVRYFVDRMVTINRPANPEQMPLVQSTSGNAYGTSRYPQHRLKAVVSKSASVKLNDN). Residues 561–581 (LWSVLFFSCLVPLPLFTCYNL) traverse the membrane as a helical segment. Topologically, residues 582 to 605 (LSEVFIPAVHQSLIDGPYSNTCYK) are vacuolar. Residues 606–626 (FAVILVFMAIINSSPFVFRAL) form a helical membrane-spanning segment. Residues 627–630 (SKKS) lie on the Cytoplasmic side of the membrane. The helical transmembrane segment at 631–651 (SAILLMLWVSLLFNILRAEPF) threads the bilayer. The Vacuolar portion of the chain corresponds to 652-847 (NEKAPIKFRV…LLKMSKTHVM (196 aa)). Asn-726, Asn-734, Asn-800, and Asn-834 each carry an N-linked (GlcNAc...) asparagine glycan.

This sequence belongs to the peptidase M28 family. It depends on Zn(2+) as a cofactor.

The protein resides in the vacuole membrane. In terms of biological role, may be involved in vacuolar sorting and osmoregulation. In Schizosaccharomyces japonicus (strain yFS275 / FY16936) (Fission yeast), this protein is Vacuolar membrane protease.